Consider the following 316-residue polypeptide: MRKLHLDSLTLQLRSDLQCIKASSSSLCDQMDCMLRVLQDLKRSSPPPSPDIEKTCAVPQRRVPRRDNRISHRTSDLSEADSACCMDLPSDVSPGSCGQRGLEWDSGYSEVSGSSLRGEEDDIVEEESETRAPAVVLRRLPTPSCQRLSSGGFLNSRQGRIRPKSTSDVCLEQWRGIGLGSDSQDWTGCLLSQSRSRQPLILGDNSFADLVKQWMDLPENGDEEGRRVRDGGRWLHKPHGFLISLSGNVKRRLGNMSRLRHSDQEAVKRMSCPQLGCRPLSPYYHQSLSDIAEASTNLLNCRSRRPIICNEGAGFL.

Positions tyrosine 108–threonine 130 are disordered. Acidic residues predominate over residues glutamate 119–serine 128. Inka box stretches follow at residues aspartate 182–glutamate 219 and serine 289–leucine 316.

The protein belongs to the INKA family. Interacts with pak4/pak5.

Its subcellular location is the nucleus. It localises to the cytoplasm. Inhibitor of the serine/threonine-protein kinase pak4/pak5. Acts by binding pak4/pak5 in a substrate-like manner, inhibiting the protein kinase activity. Required for the proper migration of neural crest cells during embryonic development, probably by inhibiting pak4/pak5. The protein is PAK4-inhibitor inka1 of Xenopus laevis (African clawed frog).